Here is a 338-residue protein sequence, read N- to C-terminus: MIVLGIESSCDETAAAVVRDGRVLLSNVIASQIGEHSKYGGVVPEIASRKHIEAVIPVILQALHDAGMELSDIEGIAVTRGPGLVGSLLVGLSVAKALAFSRKLPLVGIHHLEGHIAAIFLSEKVPEFPFIALVVSGGHTNIYFVRGFGLFTLLGQTRDDAAGEAFDKAAKLLNIGYPGGVVIDRLAKEGDRNLLNFPRAMKESLDFSFSGLKTSLLVHVKKHGSPSAREDLAHLVAAYQEAIVDVLVEKTLKAAKMNSVPQVVVCGGVASNSRLREHFMERSREENIDLFIPPPVLCTDNAAMIAVVGENLLNKGKSEELSINAVSRWPLDVAGSFR.

Histidine 111 and histidine 115 together coordinate Fe cation. Residues valine 134–glycine 138, aspartate 167, glycine 180, aspartate 184, and asparagine 272 contribute to the substrate site. Aspartate 300 is a binding site for Fe cation.

It belongs to the KAE1 / TsaD family. Fe(2+) serves as cofactor.

Its subcellular location is the cytoplasm. It catalyses the reaction L-threonylcarbamoyladenylate + adenosine(37) in tRNA = N(6)-L-threonylcarbamoyladenosine(37) in tRNA + AMP + H(+). In terms of biological role, required for the formation of a threonylcarbamoyl group on adenosine at position 37 (t(6)A37) in tRNAs that read codons beginning with adenine. Is involved in the transfer of the threonylcarbamoyl moiety of threonylcarbamoyl-AMP (TC-AMP) to the N6 group of A37, together with TsaE and TsaB. TsaD likely plays a direct catalytic role in this reaction. The polypeptide is tRNA N6-adenosine threonylcarbamoyltransferase (Syntrophus aciditrophicus (strain SB)).